The following is a 436-amino-acid chain: 3-ketoacyl-CoA thiolase (436 aa).

The active-site Acyl-thioester intermediate is the Cys99. Active-site proton acceptor residues include His392 and Cys422.

Belongs to the thiolase-like superfamily. Thiolase family. As to quaternary structure, heterotetramer of two alpha chains (FadJ) and two beta chains (FadI).

It localises to the cytoplasm. The catalysed reaction is an acyl-CoA + acetyl-CoA = a 3-oxoacyl-CoA + CoA. It functions in the pathway lipid metabolism; fatty acid beta-oxidation. Its function is as follows. Catalyzes the final step of fatty acid oxidation in which acetyl-CoA is released and the CoA ester of a fatty acid two carbons shorter is formed. This is 3-ketoacyl-CoA thiolase from Aeromonas salmonicida (strain A449).